Reading from the N-terminus, the 315-residue chain is Protein-methionine-sulfoxide reductase catalytic subunit MsrP (315 aa).

A signal peptide (tat-type signal) is located at residues methionine 1–alanine 45. Mo-molybdopterin-binding positions include asparagine 71, tyrosine 74–glutamate 75, cysteine 129, threonine 164, asparagine 214, arginine 219, and glycine 230–lysine 232.

It belongs to the MsrP family. Heterodimer of a catalytic subunit (MsrP) and a heme-binding subunit (MsrQ). Mo-molybdopterin serves as cofactor. In terms of processing, predicted to be exported by the Tat system. The position of the signal peptide cleavage has not been experimentally proven.

It localises to the periplasm. The enzyme catalyses L-methionyl-[protein] + a quinone + H2O = L-methionyl-(S)-S-oxide-[protein] + a quinol. The catalysed reaction is L-methionyl-[protein] + a quinone + H2O = L-methionyl-(R)-S-oxide-[protein] + a quinol. In terms of biological role, part of the MsrPQ system that repairs oxidized periplasmic proteins containing methionine sulfoxide residues (Met-O), using respiratory chain electrons. Thus protects these proteins from oxidative-stress damage caused by reactive species of oxygen and chlorine generated by the host defense mechanisms. MsrPQ is essential for the maintenance of envelope integrity under bleach stress, rescuing a wide series of structurally unrelated periplasmic proteins from methionine oxidation. The catalytic subunit MsrP is non-stereospecific, being able to reduce both (R-) and (S-) diastereoisomers of methionine sulfoxide. In Rhizobium etli (strain ATCC 51251 / DSM 11541 / JCM 21823 / NBRC 15573 / CFN 42), this protein is Protein-methionine-sulfoxide reductase catalytic subunit MsrP.